The following is a 1479-amino-acid chain: MHKLIIKYNKQLKMLNLRDGKTYTISEDERADITLKSLGEVIHLEQNNQGTWQANHTSINKVLVRKGDLDDITLQLYTEADYASFAYPSIQDTMTIGPNAYDDMVIQSLMNAIIIKDFQSIQESQYVRIVHDKNTDVYINYELQEQLTNKAYIGDHIYVEGIWLEVQADGLNVLSQNTVASSLIRLTQEMPHAQADDYNTYHRSPRIIHREPTDDIKIERPPQPIQKNNTVIWRSIIPPLVMIALTVVIFLVRPIGIYILMMIGMSSVTIVFGITTYFSEKKKYNKDVEKREKDYKDYLDNKSKEINKAIKAQRFSLNYHYPTVAEIKDIVETKAPRIYEKTSHHHDFLHYKLGIANVEKSFKLDYQEEEFNQRRDELFDDAKELYEFYTDVEQAPLINDLNHGPIAYIGARHLILEELEKMLIQLSIFHSYHDLEFLFVTREDEVETLKWARWLPHMTLRGQNIRGFVYNQRTRDQILTSIYSMIKERIQAVRERSKSNEQIIFTPQLVFVITDMSLIIDHVILEYVNQDLSEYGISLIFVEDVIESLPEHVDTIIDIKSRTEGELITKEKELVQLKFTPENIDNVDKEYIARRLANLIHVEHLKNAIPDSITFLEMYNVKEVDQLDVVNRWRQNETYKTMAVPLGVRGKDDILSLNLHEKAHGPHGLVAGTTGSGKSEIIQSYILSLAINFHPHEVAFLLIDYKGGGMANLFKDLVHLVGTITNLDGDEAMRALTSIKAELRKRQRLFGEHDVNHINQYHKLFKEGIATEPMPHLFIISDEFAELKSEQPDFMKELVSTARIGRSLGIHLILATQKPSGVVDDQIWSNSKFKLALKVQDRQDSNEILKTPDAADITLPGRAYLQVGNNEIYELFQSAWSGATYDIEGDKLEVEDKTIYMINDYGQLQAINKDLSGLEDEETKENQTELEAVIDHIESITTRLEIEEVKRPWLPPLPENVYQEDLVETDFRKLWSDDAKEVELTLGLKDVPEEQYQGPMVLQLKKAGHIALIGSPGYGRTTFLHNIIFDVARHHRPDQAHMYLFDFGTNGLMPVTDIPHVADYFTVDQEDKIAKAIRIFNDEIDRRKKILSQYRVTSISEYRKLTGETIPHVFILIDNFDAVKDSPFQEVFENMMIKMTREGLALDMQVTLTASRANAMKTPMYINMKTRIAMFLYDKSEVSNVVGQQKFAVKDVVGRALLSSDDNVSFHIGQPFKHDETKSYNDQINDEVSAMTEFYKGETPSDIPMMPDEIKYEDYRESLSLPDIVANGALPIGLDYEGVTLQKIKLTEPAMISSENPREIAHIAEIMMKEIDILNEKYAICIADSSGEFKAYRHQVANFAEEREDIKAIHQLMIEDLKQREMDGPFEKDSLYIINDFKTFIDCTYIPEDDVKKLITKGPELGLNILFVGIHKELIDAYDKQIDVARKMINQFSIGIRISDQQFFKFRFIQREPVIKENEAYMVANQAYQKIRWFK.

Residues 1–229 (MHKLIIKYNK…RPPQPIQKNN (229 aa)) are Cytoplasmic-facing. A helical transmembrane segment spans residues 230–252 (TVIWRSIIPPLVMIALTVVIFLV). Over 253–256 (RPIG) the chain is Extracellular. A helical transmembrane segment spans residues 257–279 (IYILMMIGMSSVTIVFGITTYFS). Residues 280–1479 (EKKKYNKDVE…QAYQKIRWFK (1200 aa)) are Cytoplasmic-facing. FtsK domains lie at 652–846 (DDIL…QDSN) and 997–1183 (QGPM…SEVS). ATP is bound by residues 672 to 679 (GTTGSGKS) and 1014 to 1021 (GSPGYGRT).

This sequence belongs to the EssC family. In terms of assembly, homooligomer. Interacts with EsaE.

Its subcellular location is the cell membrane. Component of the type VII secretion system (Ess). Required for the secretion of substrates including EsxA and EsxB. However, unable to support secretion of the substrate protein EsxC. In Staphylococcus aureus (strain MSSA476), this protein is Type VII secretion system protein EssC.